The following is a 290-amino-acid chain: Acetylglutamate kinase (290 aa).

Substrate contacts are provided by residues 64–65 (GG), R86, and N183.

Belongs to the acetylglutamate kinase family. ArgB subfamily.

The protein localises to the cytoplasm. It carries out the reaction N-acetyl-L-glutamate + ATP = N-acetyl-L-glutamyl 5-phosphate + ADP. It participates in amino-acid biosynthesis; L-arginine biosynthesis; N(2)-acetyl-L-ornithine from L-glutamate: step 2/4. Functionally, catalyzes the ATP-dependent phosphorylation of N-acetyl-L-glutamate. This Halothermothrix orenii (strain H 168 / OCM 544 / DSM 9562) protein is Acetylglutamate kinase.